Consider the following 627-residue polypeptide: Phosphomethylpyrimidine synthase (627 aa).

Polar residues predominate over residues 1–24 (MSATQKNNITRLEQLDRQSTQPFP). The segment at 1–29 (MSATQKNNITRLEQLDRQSTQPFPNSRKV) is disordered. Substrate is bound by residues Asn231, Met260, Tyr289, His325, 345–347 (SRG), 386–389 (DGLR), and Glu425. A Zn(2+)-binding site is contributed by His429. Tyr452 provides a ligand contact to substrate. His493 serves as a coordination point for Zn(2+). The [4Fe-4S] cluster site is built by Cys573, Cys576, and Cys581.

The protein belongs to the ThiC family. As to quaternary structure, homodimer. The cofactor is [4Fe-4S] cluster.

The catalysed reaction is 5-amino-1-(5-phospho-beta-D-ribosyl)imidazole + S-adenosyl-L-methionine = 4-amino-2-methyl-5-(phosphooxymethyl)pyrimidine + CO + 5'-deoxyadenosine + formate + L-methionine + 3 H(+). Its pathway is cofactor biosynthesis; thiamine diphosphate biosynthesis. Its function is as follows. Catalyzes the synthesis of the hydroxymethylpyrimidine phosphate (HMP-P) moiety of thiamine from aminoimidazole ribotide (AIR) in a radical S-adenosyl-L-methionine (SAM)-dependent reaction. This Pseudomonas aeruginosa (strain UCBPP-PA14) protein is Phosphomethylpyrimidine synthase.